A 425-amino-acid chain; its full sequence is Histone-binding protein RBBP4 (425 aa).

The residue at position 2 (alanine 2) is an N-acetylalanine. Lysine 4 carries the post-translational modification N6-acetyllysine; alternate. Lysine 4 is covalently cross-linked (Glycyl lysine isopeptide (Lys-Gly) (interchain with G-Cter in SUMO2); alternate). Lysine 4 participates in a covalent cross-link: Glycyl lysine isopeptide (Lys-Gly) (interchain with G-Cter in ubiquitin); alternate. WD repeat units follow at residues 32-125, 126-175, 176-223, 225-270, 271-314, 315-371, and 372-404; these read YDLV…NHEG, EVNR…RLRG, HQKE…KTIF, GHTA…HSVD, AHTA…HSFE, SHKD…FIHG, and GHTAKISDFSWNPNEPWVICSVSEDNIMQVWQM. A Phosphoserine modification is found at serine 110. At lysine 160 the chain carries N6-acetyllysine; alternate. A Glycyl lysine isopeptide (Lys-Gly) (interchain with G-Cter in SUMO2); alternate cross-link involves residue lysine 160. Position 355 is a phosphoserine (serine 355).

The protein belongs to the WD repeat RBAP46/RBAP48/MSI1 family. In terms of assembly, binds directly to helix 1 of the histone fold of histone H4, a region that is not accessible when H4 is in chromatin. Subunit of the chromatin assembly factor 1 (CAF-1) complex, which is composed of RBBP4, CHAF1B and CHAF1A. Subunit of the core histone deacetylase (HDAC) complex, which is composed of HDAC1, HDAC2, RBBP4 and RBBP7. The core HDAC complex associates with SIN3A, ARID4B/SAP180, SAP18, SAP30, SAP130, SUDS3/SAP45 and possibly ARID4A/RBP1 and ING1 to form the SIN3 HDAC complex. Component of the nucleosome remodeling and deacetylase (NuRD) repressor complex, composed of core proteins MTA1, MTA2, MTA3, RBBP4, RBBP7, HDAC1, HDAC2, MBD2, MBD3, and peripherally associated proteins CDK2AP1, CDK2AP2, GATAD2A, GATAD2B, CHD3, CHD4 and CHD5. The exact stoichiometry of the NuRD complex is unknown, and some subunits such as MBD2 and MBD3, GATAD2A and GATAD2B, and CHD3, CHD4 and CHD5 define mutually exclusive NuRD complexes. Interacts with ZNF512B; the interaction is direct and may play a role in repressing gene expression. The NuRD complex may also interact with MBD3L1 and MBD3L2. Component of the PRC2 complex, which consists of the core subunits EED, EZH1 or EZH2, SUZ12, and RBBP4, and various combinations of accessory subunits including AEBP2, JARID2, PHF19, MTF2 and EPOP. Forms a monomeric PRC2.2 (class 2) complex consisting of at least SUZ12, RBBP4, AEBP2 and JARID2. Forms a dimeric PRC2.1 (class 1, PRC-PCL) complex consisting of at least SUZ12, RBBP4, and PHF19; PHF19 stabilizes the dimeric structure which enhances PRC2 interaction with chromatin. Component of the NURF-1 ISWI chromatin remodeling complex (also called the nucleosome-remodeling factor (NURF) complex) at least composed of SMARCA1 (isoform 2), BPTF, RBBP4 and RBBP7. Within the complex interacts with isoform 2 of SMARCA1. Component of the BPFT-SMARCA1 complex at least composed of SMARCA1 (isoform 1), BPFT, RBBP4 and RBBP7; the complex is catalytically inactive and does not remodel chromatin. Within the complex interacts with isoform 1 of SMARCA1. Interacts with the ISWI chromatin remodeling complex component SMARCA5; the interaction is direct. Interacts with the viral protein-binding domain of the retinoblastoma protein (RB1). Component of the DREAM complex (also named LINC complex) at least composed of E2F4, E2F5, LIN9, LIN37, LIN52, LIN54, MYBL1, MYBL2, RBL1, RBL2, RBBP4, TFDP1 and TFDP2. The complex exists in quiescent cells where it represses cell cycle-dependent genes. It dissociates in S phase when LIN9, LIN37, LIN52 and LIN54 form a subcomplex that binds to MYBL2. Found in a complex composed of at least SINHCAF, SIN3A, HDAC1, SAP30, RBBP4, OGT and TET1. Interacts with ZNF827; the interaction is direct and recruits RBBP4 to telomeres. Interacts with MTA1; the interaction is direct and mutually exclusive with binding histone H4. Interacts with ARMC12 (via ARM domains). Interacts with BRCA1. Interacts with CDK2AP1. Interacts with CREBBP, and this interaction may be enhanced by the binding of phosphorylated CREB1 to CREBBP. Interacts with ERCC6. Interacts with HDAC7. Interacts with PHF6. Interacts with PWWP2B. Interacts with SPEN/MINT. Interacts with SUV39H1.

The protein resides in the nucleus. It is found in the chromosome. The protein localises to the telomere. Core histone-binding subunit that may target chromatin assembly factors, chromatin remodeling factors and histone deacetylases to their histone substrates in a manner that is regulated by nucleosomal DNA. Component of the chromatin assembly factor 1 (CAF-1) complex, which is required for chromatin assembly following DNA replication and DNA repair. Component of the core histone deacetylase (HDAC) complex, which promotes histone deacetylation and consequent transcriptional repression. Component of the nucleosome remodeling and histone deacetylase complex (the NuRD complex), which promotes transcriptional repression by histone deacetylation and nucleosome remodeling. Component of the PRC2 complex, which promotes repression of homeotic genes during development. Component of the NURF (nucleosome remodeling factor) complex. The protein is Histone-binding protein RBBP4 (RBBP4) of Bos taurus (Bovine).